Here is a 145-residue protein sequence, read N- to C-terminus: Putative type I specificity subunit S.MpnORF289P C-terminus (145 aa).

It belongs to the type-I restriction system S methylase family. In terms of assembly, the methyltransferase is composed of M and S polypeptides.

Functionally, the C-terminal section of a specificity (S) subunit of a type I methyltransferase (MTase); this subunit dictates DNA sequence specificity. The single R subunit has multiple frameshifts and is probably not expressed. This is Putative type I specificity subunit S.MpnORF289P C-terminus from Mycoplasma pneumoniae (strain ATCC 29342 / M129 / Subtype 1) (Mycoplasmoides pneumoniae).